The following is a 209-amino-acid chain: COP9 signalosome complex subunit 8 (209 aa).

The 172-residue stretch at 8–179 (DNAFSFRKLL…GALDVSLNRF (172 aa)) folds into the PCI domain. Ser-175 is subject to Phosphoserine.

The protein belongs to the CSN8 family. In terms of assembly, component of the CSN complex, composed of COPS1/GPS1, COPS2, COPS3, COPS4, COPS5, COPS6, COPS7 (COPS7A or COPS7B), COPS8 and COPS9. In the complex, it probably interacts directly with COPS3, COPS4 and COPS7 (COPS7A or COPS7B).

The protein resides in the cytoplasm. Its subcellular location is the nucleus. In terms of biological role, component of the COP9 signalosome complex (CSN), a complex involved in various cellular and developmental processes. The CSN complex is an essential regulator of the ubiquitin (Ubl) conjugation pathway by mediating the deneddylation of the cullin subunits of SCF-type E3 ligase complexes, leading to decrease the Ubl ligase activity of SCF-type complexes such as SCF, CSA or DDB2. The complex is also involved in phosphorylation of p53/TP53, c-jun/JUN, IkappaBalpha/NFKBIA, ITPK1 and IRF8/ICSBP, possibly via its association with CK2 and PKD kinases. CSN-dependent phosphorylation of TP53 and JUN promotes and protects degradation by the Ubl system, respectively. In Rattus norvegicus (Rat), this protein is COP9 signalosome complex subunit 8 (Cops8).